Here is a 563-residue protein sequence, read N- to C-terminus: Light-independent protochlorophyllide reductase subunit B (563 aa).

A [4Fe-4S] cluster-binding site is contributed by D36. The active-site Proton donor is the D349. 484 to 485 (GM) is a binding site for substrate.

Belongs to the ChlB/BchB/BchZ family. In terms of assembly, protochlorophyllide reductase is composed of three subunits; ChlL, ChlN and ChlB. Forms a heterotetramer of two ChlB and two ChlN subunits. It depends on [4Fe-4S] cluster as a cofactor.

Its subcellular location is the plastid. It localises to the chloroplast. It carries out the reaction chlorophyllide a + oxidized 2[4Fe-4S]-[ferredoxin] + 2 ADP + 2 phosphate = protochlorophyllide a + reduced 2[4Fe-4S]-[ferredoxin] + 2 ATP + 2 H2O. It functions in the pathway porphyrin-containing compound metabolism; chlorophyll biosynthesis (light-independent). Its function is as follows. Component of the dark-operative protochlorophyllide reductase (DPOR) that uses Mg-ATP and reduced ferredoxin to reduce ring D of protochlorophyllide (Pchlide) to form chlorophyllide a (Chlide). This reaction is light-independent. The NB-protein (ChlN-ChlB) is the catalytic component of the complex. The polypeptide is Light-independent protochlorophyllide reductase subunit B (Chlamydomonas moewusii (Chlamydomonas eugametos)).